Consider the following 149-residue polypeptide: Large ribosomal subunit protein uL15 (149 aa).

Residues 30-63 (GLGKTAGRGHKGSFARKGGGKIKPGFEGGQTPMQ) are disordered. Positions 36–49 (GRGHKGSFARKGGG) are enriched in basic residues.

This sequence belongs to the universal ribosomal protein uL15 family. As to quaternary structure, part of the 50S ribosomal subunit.

Binds to the 23S rRNA. The polypeptide is Large ribosomal subunit protein uL15 (Xylella fastidiosa (strain 9a5c)).